The following is a 543-amino-acid chain: ABC transport system permease protein p69 (543 aa).

12 helical membrane passes run 18-38, 78-98, 115-135, 141-161, 211-231, 237-257, 288-308, 354-374, 379-399, 413-433, 482-502, and 510-530; these read IWYW…YSWI, AFFV…FSYW, ITIV…SNLF, ATLT…TTFF, TLLS…PLSI, LVLI…VVVF, IIFI…LVTI, ISLI…SCNL, FSIS…ILLF, IILV…SINF, LILF…NFFE, and GSVT…FLSV. The region spanning 74–256 is the ABC transmembrane type-1 domain; it reads LAQTAFFVTG…TFLIFIEVVV (183 aa).

Belongs to the binding-protein-dependent transport system permease family.

The protein resides in the cell membrane. Its function is as follows. Probably part of a high-affinity transport system. The chain is ABC transport system permease protein p69 (p69) from Mycoplasma genitalium (strain ATCC 33530 / DSM 19775 / NCTC 10195 / G37) (Mycoplasmoides genitalium).